A 375-amino-acid chain; its full sequence is Dual-specificity RNA methyltransferase RlmN (375 aa).

Glutamate 98 (proton acceptor) is an active-site residue. The 241-residue stretch at 106-346 (GGKRRTLCVS…VRTTRGDDID (241 aa)) folds into the Radical SAM core domain. Residues cysteine 113 and cysteine 349 are joined by a disulfide bond. Positions 120, 124, and 127 each coordinate [4Fe-4S] cluster. Residues 174-175 (GE), serine 206, 228-230 (SLH), and asparagine 306 contribute to the S-adenosyl-L-methionine site. Cysteine 349 acts as the S-methylcysteine intermediate in catalysis.

Belongs to the radical SAM superfamily. RlmN family. [4Fe-4S] cluster is required as a cofactor.

The protein localises to the cytoplasm. It catalyses the reaction adenosine(2503) in 23S rRNA + 2 reduced [2Fe-2S]-[ferredoxin] + 2 S-adenosyl-L-methionine = 2-methyladenosine(2503) in 23S rRNA + 5'-deoxyadenosine + L-methionine + 2 oxidized [2Fe-2S]-[ferredoxin] + S-adenosyl-L-homocysteine. The enzyme catalyses adenosine(37) in tRNA + 2 reduced [2Fe-2S]-[ferredoxin] + 2 S-adenosyl-L-methionine = 2-methyladenosine(37) in tRNA + 5'-deoxyadenosine + L-methionine + 2 oxidized [2Fe-2S]-[ferredoxin] + S-adenosyl-L-homocysteine. Its function is as follows. Specifically methylates position 2 of adenine 2503 in 23S rRNA and position 2 of adenine 37 in tRNAs. m2A2503 modification seems to play a crucial role in the proofreading step occurring at the peptidyl transferase center and thus would serve to optimize ribosomal fidelity. The chain is Dual-specificity RNA methyltransferase RlmN from Chromohalobacter salexigens (strain ATCC BAA-138 / DSM 3043 / CIP 106854 / NCIMB 13768 / 1H11).